Reading from the N-terminus, the 61-residue chain is Small ribosomal subunit protein uS14 (61 aa).

Residues Cys24, Cys27, Cys40, and Cys43 each contribute to the Zn(2+) site.

This sequence belongs to the universal ribosomal protein uS14 family. Zinc-binding uS14 subfamily. As to quaternary structure, part of the 30S ribosomal subunit. Contacts proteins S3 and S10. Zn(2+) serves as cofactor.

Its function is as follows. Binds 16S rRNA, required for the assembly of 30S particles and may also be responsible for determining the conformation of the 16S rRNA at the A site. The chain is Small ribosomal subunit protein uS14 from Fervidobacterium nodosum (strain ATCC 35602 / DSM 5306 / Rt17-B1).